The following is a 617-amino-acid chain: V-type proton ATPase catalytic subunit A (617 aa).

An ATP-binding site is contributed by 257 to 264 (GAFGCGKT).

It belongs to the ATPase alpha/beta chains family. In terms of assembly, V-ATPase is a heteromultimeric enzyme composed of a peripheral catalytic V1 complex (components A to H) attached to an integral membrane V0 proton pore complex (components: a, c, c', c'', d, e, f and VOA1). Post-translationally, is a probable target for sumoylation.

It localises to the vacuole membrane. It carries out the reaction ATP + H2O + 4 H(+)(in) = ADP + phosphate + 5 H(+)(out). Catalytic subunit of the V1 complex of vacuolar(H+)-ATPase (V-ATPase), a multisubunit enzyme composed of a peripheral complex (V1) that hydrolyzes ATP and a membrane integral complex (V0) that translocates protons. V-ATPase is responsible for acidifying and maintaining the pH of intracellular compartments. Mediates oxidative stress response, filamentous growth, and plays an important role in virulence. The polypeptide is V-type proton ATPase catalytic subunit A (Candida albicans (strain SC5314 / ATCC MYA-2876) (Yeast)).